We begin with the raw amino-acid sequence, 292 residues long: Protease HtpX (292 aa).

Helical transmembrane passes span Ile-4–Leu-24 and Gly-34–Ser-54. His-139 is a binding site for Zn(2+). Residue Glu-140 is part of the active site. His-143 serves as a coordination point for Zn(2+). Transmembrane regions (helical) follow at residues Ile-158–Leu-178 and Met-192–Ile-212. A Zn(2+)-binding site is contributed by Glu-221.

This sequence belongs to the peptidase M48B family. The cofactor is Zn(2+).

The protein resides in the cell inner membrane. The protein is Protease HtpX of Serratia proteamaculans (strain 568).